Reading from the N-terminus, the 165-residue chain is Growth arrest and DNA damage-inducible protein GADD45 alpha (165 aa).

Thr2 is modified (phosphothreonine).

This sequence belongs to the GADD45 family. Interacts with MAPK14. Predominantly monomeric but also forms dimers and other oligomers as concentration increases. Interacts with GADD45GIP1. Interacts weakly with PCNA. Interacts with AURKA, likely to compete with dimerization.

The protein localises to the nucleus. Functionally, in T-cells, functions as a regulator of p38 MAPKs by inhibiting p88 phosphorylation and activity. Might affect PCNA interaction with some CDK (cell division protein kinase) complexes; stimulates DNA excision repair in vitro and inhibits entry of cells into S phase. The polypeptide is Growth arrest and DNA damage-inducible protein GADD45 alpha (GADD45A) (Homo sapiens (Human)).